Here is a 209-residue protein sequence, read N- to C-terminus: Ribosome maturation factor RimM (209 aa).

Residues 103–178 (EGATYVSDLV…RIEMVLPQGM (76 aa)) form the PRC barrel domain. A disordered region spans residues 184–209 (PLSKAEKERQKSEADETREAGERRKR). Residues 187-209 (KAEKERQKSEADETREAGERRKR) show a composition bias toward basic and acidic residues.

Belongs to the RimM family. Binds ribosomal protein uS19.

The protein localises to the cytoplasm. Its function is as follows. An accessory protein needed during the final step in the assembly of 30S ribosomal subunit, possibly for assembly of the head region. Essential for efficient processing of 16S rRNA. May be needed both before and after RbfA during the maturation of 16S rRNA. It has affinity for free ribosomal 30S subunits but not for 70S ribosomes. In Koribacter versatilis (strain Ellin345), this protein is Ribosome maturation factor RimM.